Consider the following 379-residue polypeptide: Glutamate 5-kinase (379 aa).

Lys19 contributes to the ATP binding site. The substrate site is built by Ser59, Asp146, and Asn158. ATP contacts are provided by residues 178-179 (TD) and 220-226 (TGGMATK). The PUA domain maps to 285-363 (SGDIIIDDGA…KDIISILGHD (79 aa)).

Belongs to the glutamate 5-kinase family.

The protein localises to the cytoplasm. It catalyses the reaction L-glutamate + ATP = L-glutamyl 5-phosphate + ADP. Its pathway is amino-acid biosynthesis; L-proline biosynthesis; L-glutamate 5-semialdehyde from L-glutamate: step 1/2. Functionally, catalyzes the transfer of a phosphate group to glutamate to form L-glutamate 5-phosphate. The chain is Glutamate 5-kinase from Vibrio parahaemolyticus serotype O3:K6 (strain RIMD 2210633).